The following is a 55-amino-acid chain: Large ribosomal subunit protein bL33 (55 aa).

Positions 1-11 are enriched in basic and acidic residues; sequence MAKGGREKIKL. Positions 1 to 29 are disordered; it reads MAKGGREKIKLESTAGTGHFYTTTKNKKT. Over residues 14–24 the composition is skewed to polar residues; it reads TAGTGHFYTTT.

This sequence belongs to the bacterial ribosomal protein bL33 family.

This Thiobacillus denitrificans (strain ATCC 25259 / T1) protein is Large ribosomal subunit protein bL33.